The primary structure comprises 278 residues: MSSGAAHSALTEEDVMKLLATQAHLGSTNLNFQMQQYVYKRRFDGPNIINVKKTWEKLLLAARAIAAVENPADVVVVSARPYAQRALLKFAAHTGATAIFGRFSPGCLTNQIQKTFKEPRLLVISDPRIDHQAVTEASYVGVPVISFVNTESPLKLIDIGVPCNNKGERSIGLMWWMLAREILILRGKISRQTGFVLDGKEIMPDLYFYRDPTETEKEETGAHAEVAETQEFQQQPDIDFTAQGGKVEDWAAETATWTNEGKTAADEWATGAQTQSNW.

Serine 2 bears the N-acetylserine mark. Positions 258-278 are disordered; sequence TNEGKTAADEWATGAQTQSNW.

It belongs to the universal ribosomal protein uS2 family. In terms of assembly, component of the small ribosomal subunit. Mature ribosomes consist of a small (40S) and a large (60S) subunit. The 40S subunit contains about 33 different proteins and 1 molecule of RNA (18S). The 60S subunit contains about 49 different proteins and 3 molecules of RNA (28S, 5.8S and 5S). Interacts with rps-21.

The protein localises to the cytoplasm. Its function is as follows. Required for the assembly and/or stability of the 40S ribosomal subunit. Required for the processing of the 20S rRNA-precursor to mature 18S rRNA in a late step of the maturation of 40S ribosomal subunits. In Caenorhabditis briggsae, this protein is Small ribosomal subunit protein uS2.